An 84-amino-acid chain; its full sequence is MAHKKGGGSTKNGRDSNPKYLGVKAAGGSTVNAGTIILRQRGTAIKPGDNAGLGKDHTIFALVDGTVHFRNGRNNKKQVDIIPS.

The interval 1–21 (MAHKKGGGSTKNGRDSNPKYL) is disordered.

Belongs to the bacterial ribosomal protein bL27 family.

The polypeptide is Large ribosomal subunit protein bL27 (Chlorobaculum parvum (strain DSM 263 / NCIMB 8327) (Chlorobium vibrioforme subsp. thiosulfatophilum)).